Consider the following 267-residue polypeptide: MKKATTILDIQKMKAEGEKISMLTCYDYPTARIMDDCGIDMILIGDSVGVVYAGYDNTLPVTMEDMIYHTRAVVRAQPKALVVADMPFLSYQTDMVSARLNAGRLIKEGGAAAVKIEGGVNVAPVIEAITSMDIPVVAHIGLTPQSLHRMGGYRVQGRNNEQAEKLLADARAVESAGAFAVVLEGIPAALAARITSESGIPTIGIGAGPSCDGQVLVIHDILGLCEKYAPKFVKRYADLKPVIAQAISSYIQEVKEGAFPTEGNSFN.

Mg(2+) contacts are provided by Asp-46 and Asp-85. Residues 46-47, Asp-85, and Lys-115 each bind 3-methyl-2-oxobutanoate; that span reads DS. Residue Glu-117 coordinates Mg(2+). Glu-184 acts as the Proton acceptor in catalysis.

This sequence belongs to the PanB family. In terms of assembly, homodecamer; pentamer of dimers. It depends on Mg(2+) as a cofactor.

The protein localises to the cytoplasm. It catalyses the reaction 3-methyl-2-oxobutanoate + (6R)-5,10-methylene-5,6,7,8-tetrahydrofolate + H2O = 2-dehydropantoate + (6S)-5,6,7,8-tetrahydrofolate. It participates in cofactor biosynthesis; (R)-pantothenate biosynthesis; (R)-pantoate from 3-methyl-2-oxobutanoate: step 1/2. In terms of biological role, catalyzes the reversible reaction in which hydroxymethyl group from 5,10-methylenetetrahydrofolate is transferred onto alpha-ketoisovalerate to form ketopantoate. The polypeptide is 3-methyl-2-oxobutanoate hydroxymethyltransferase (Geotalea daltonii (strain DSM 22248 / JCM 15807 / FRC-32) (Geobacter daltonii)).